We begin with the raw amino-acid sequence, 486 residues long: Protein DETOXIFICATION 53 (486 aa).

12 helical membrane passes run 15–35, 45–65, 94–114, 130–150, 159–179, 187–207, 240–260, 267–287, 312–332, 346–366, 386–406, and 413–433; these read CPIV…MWFL, GGAL…KGLS, LLIV…PIFL, MLFF…RTFL, LTIS…VFVV, GVAI…LVYT, AISV…CGLL, VAAM…PFAI, VIGL…VTAL, ILGL…GNSP, VNLC…TFGF, and LWFG…YTLI. Positions 448-474 are disordered; sequence TSAAADKSHSEDETVHAEVQDDDDVSS. Over residues 453-466 the composition is skewed to basic and acidic residues; the sequence is DKSHSEDETVHAEV.

The protein belongs to the multi antimicrobial extrusion (MATE) (TC 2.A.66.1) family.

It localises to the membrane. The chain is Protein DETOXIFICATION 53 from Arabidopsis thaliana (Mouse-ear cress).